The chain runs to 404 residues: Putative arginine deiminase (404 aa).

The active-site Amidino-cysteine intermediate is the Cys-394.

Belongs to the arginine deiminase family.

Its subcellular location is the cytoplasm. It carries out the reaction L-arginine + H2O = L-citrulline + NH4(+). Its pathway is amino-acid degradation; L-arginine degradation via ADI pathway; carbamoyl phosphate from L-arginine: step 1/2. This is Putative arginine deiminase (arcA) from Mycoplasma pneumoniae (strain ATCC 29342 / M129 / Subtype 1) (Mycoplasmoides pneumoniae).